Here is a 201-residue protein sequence, read N- to C-terminus: 3-isopropylmalate dehydratase small subunit (201 aa).

Belongs to the LeuD family. LeuD type 1 subfamily. In terms of assembly, heterodimer of LeuC and LeuD.

The catalysed reaction is (2R,3S)-3-isopropylmalate = (2S)-2-isopropylmalate. It functions in the pathway amino-acid biosynthesis; L-leucine biosynthesis; L-leucine from 3-methyl-2-oxobutanoate: step 2/4. Its function is as follows. Catalyzes the isomerization between 2-isopropylmalate and 3-isopropylmalate, via the formation of 2-isopropylmaleate. This chain is 3-isopropylmalate dehydratase small subunit, found in Salmonella schwarzengrund (strain CVM19633).